A 205-amino-acid polypeptide reads, in one-letter code: Ras-related protein RABD1 (205 aa).

At Ser-2 the chain carries N-acetylserine. Residues 15 to 23, 33 to 40, 63 to 67, 121 to 124, and 151 to 153 each bind GTP; these read GDSSVGKSC, YIDSYIST, DTAGQ, NKND, and SAK. An Effector region motif is present at residues 37-45; it reads YISTIGVDF. Composition is skewed to polar residues over residues 174–186 and 194–205; these read GSQT…SGPG and PIQQNNGGCCGQ. Positions 174–205 are disordered; sequence GSQTNANKTSGPGTVQMKGQPIQQNNGGCCGQ. S-geranylgeranyl cysteine attachment occurs at residues Cys-202 and Cys-203.

Belongs to the small GTPase superfamily. Rab family. In terms of assembly, does not interact with GC5. Interacts with XI-2/MYA2.

It localises to the golgi apparatus. It is found in the trans-Golgi network membrane. The protein resides in the golgi apparatus membrane. Functionally, protein transport. Regulator of membrane traffic from the Golgi apparatus towards the endoplasmic reticulum (ER). The chain is Ras-related protein RABD1 (RABD1) from Arabidopsis thaliana (Mouse-ear cress).